A 409-amino-acid chain; its full sequence is Putative competence-damage inducible protein (409 aa).

The protein belongs to the CinA family.

This is Putative competence-damage inducible protein from Clostridium tetani (strain Massachusetts / E88).